The following is a 166-amino-acid chain: Putative transcriptional regulatory protein for hcr operon (166 aa).

Residues 1–155 form the HTH marR-type domain; it reads MRKHRGKPAN…LIGLLKRLYR (155 aa).

Its function is as follows. May be involved in the regulation of genes for 4-hydroxybenzoyl-CoA reductase. The chain is Putative transcriptional regulatory protein for hcr operon from Thauera aromatica.